Consider the following 435-residue polypeptide: Eukaryotic peptide chain release factor subunit 1-3 (435 aa).

The residue at position 2 (Ala-2) is an N-acetylalanine.

The protein belongs to the eukaryotic release factor 1 family. As to quaternary structure, heterodimer of two subunits, one of which binds GTP.

It is found in the cytoplasm. Its function is as follows. Directs the termination of nascent peptide synthesis (translation) in response to the termination codons UAA, UAG and UGA. Modulates plant growth and development. This chain is Eukaryotic peptide chain release factor subunit 1-3 (ERF1-3), found in Arabidopsis thaliana (Mouse-ear cress).